The sequence spans 3253 residues: tRNA nuclease CdiA (3253 aa).

The first 32 residues, 1–32 (MHQPPVRFPYRLLSYLISTIIAGQPLLPAVGA), serve as a signal peptide directing secretion. The tract at residues 36–322 (PQNGAGMDKA…AGGNLSVTGT (287 aa)) is two-partner system transport domain (TPS). An FHA-1 region spans residues 351–1384 (GELTAGQNAM…ITIRTGHLLN (1034 aa)). A receptor binding domain (RBD) region spans residues 1385-1656 (QREGINETKS…DLASGIVEGN (272 aa)). Positions 1657–1841 (YPLPSGNNGY…LSPKDVTLQN (185 aa)) are YP domain. The interval 1842–1902 (GSIISGQNVH…GLKAMGDINN (61 aa)) is periplasmic FHA-1 repeat (pFR). Residues 1944–2548 (TYTGSIASVS…TSKYDSKQTS (605 aa)) form an FHA-2 region. Disordered stretches follow at residues 2228–2252 (GSSK…TIGS), 2362–2410 (TGDP…GKNR), 2483–2503 (GSEK…GKTV), and 2687–2712 (IRDR…DSIS). Composition is skewed to polar residues over residues 2240–2252 (GTTQ…TIGS), 2368–2403 (TGVS…NLSV), and 2490–2503 (TEWT…GKTV). Residues 2888-2930 (SDLSEEQKQTISTLATVSAGLAGGLTGNSSASAAVGAQSGKNA) form a pretoxin (PT) domain region. Positions 2931–2934 (VDNN) match the VDNN CT cleavage motif motif. The interval 2931–3253 (VDNNYLSVSE…TGIVSNFHPK (323 aa)) is C-terminal effector domain (CT).

The protein in the N-terminal section; belongs to the CdiA toxin family. In the C-terminal section; belongs to the bacterial EndoU family. Forms a 1:1 complex with cognate immunity protein CdiI-STECO31. Requires tRNase activity is metal-independent. as cofactor. The CT domain is cleaved upon binding to receptor Tsx on target cells.

It is found in the secreted. The protein resides in the target cell. Its subcellular location is the target cell cytoplasm. Toxic component of a toxin-immunity protein module, which functions as a cellular contact-dependent growth inhibition (CDI) system. CDI modules allow bacteria to communicate with and inhibit the growth of closely related neighboring target bacteria in a contact-dependent fashion (target cell counts decrease 1000- to 10000-fold with this CDI). Uses outer membrane nucleoside transporter Tsx on target cells as a receptor. Gains access to the cytoplasm of target cells by using integral inner membrane protein PTS system glucose-specific EIICB component (ptsG). Targeting of the C-terminal domain (CT) domain (residues 2931-3253) in the absence of immunity protein inhibits cell growth and causes tRNA(UUC-Glu) cleavage; expression of cognate immunity protein CdiI-STECO31 neutralizes growth inhibition leaving tRNA(UUC-Glu) is intact, whereas non-cognate immunity proteins do not confer protection. The CT domain cleaves tRNA; it is most active against tRNA(UUC-Glu), but also has modest activity against tRNA(GUC-Asp), tRNA(UUG-Gln), tRNA(CCC-Gly), tRNA(UCC-Gly), tRNA(GCC-Gly), tRNA(UUU-Lys), tRNA(GGU-Thr) and tRNA(CCA-Trp); tRNA cleavage is inhibited by cognate immunity protein CdiI. Cleavage of tRNA(UUC-Glu) occurs in the anticodon loop between cytosine(37) and 2-methyladenosine(38) (C37-m2A38) and probably also occurs in the anticodon loop of other tRNAs as well. Its function is as follows. The CdiA protein is thought to be exported from the cell through the central lumen of CdiB, the other half of its two-partner system (TPS). The TPS domain probably remains associated with CdiB while the FHA-1 domain forms an extended filament (33 nm long) with the receptor-binding domain (RBD) at its extremity; in the secretion arrested state the C-terminus of the RBD and YP domains form a hairpin-like structure as the FHA-2, PT and CT domains are periplasmic. The YP domain is probably responsible for this arrest at the point where it re-enters the host cell periplasm. Upon binding to a target cell outer membrane receptor (Tsx for this CDI) a signal is transmitted to activate secretion. The filament becomes about 5 nm longer, the rest of CdiA is secreted and the FHA-2 domain becomes stably associated with the target cell's outer membrane where it facilitates entry of the toxic CT domain into the target cell periplasm. From there the toxic CT domain is cleaved and gains access to the target cell cytoplasm via an inner membrane protein (PTS system glucose-specific EIICB component, ptsG for this CDI). This chain is tRNA nuclease CdiA, found in Escherichia coli (strain STEC_O31).